A 722-amino-acid chain; its full sequence is Probable glycerol-3-phosphate dehydrogenase, mitochondrial (722 aa).

The transit peptide at 1–43 directs the protein to the mitochondrion; sequence MSWVRFTKTGVAVVATSAAAVLALDMTNERRFQRQVKDHFRTV. Position 76–104 (76–104) interacts with FAD; the sequence is DVLIIGGGATGAGVALDAQTRGLKTALVE. 2 EF-hand domains span residues 624–659 and 660–695; these read EEMQ…HNQK and IDER…LKGG. Ca(2+) contacts are provided by aspartate 673, asparagine 675, asparagine 677, glutamate 679, and glutamate 684.

The protein belongs to the FAD-dependent glycerol-3-phosphate dehydrogenase family. Requires FAD as cofactor.

It localises to the mitochondrion. The enzyme catalyses a quinone + sn-glycerol 3-phosphate = dihydroxyacetone phosphate + a quinol. The protein operates within polyol metabolism; glycerol degradation via glycerol kinase pathway; glycerone phosphate from sn-glycerol 3-phosphate (anaerobic route): step 1/1. With respect to regulation, calcium-binding enhances the activity of the enzyme. This Caenorhabditis elegans protein is Probable glycerol-3-phosphate dehydrogenase, mitochondrial.